Here is a 102-residue protein sequence, read N- to C-terminus: Acid shock protein (102 aa).

The N-terminal stretch at 1–21 (MKKVLALVVAAAMGLSSAAFA) is a signal peptide. Residues 21–41 (AAETTTTPAPTATTTKAAPAK) are compositionally biased toward low complexity. Residues 21–102 (AAETTTTPAP…PAKPAAQPAA (82 aa)) form a disordered region. Residues 22–58 (AETTTTPAPTATTTKAAPAKTTHHKKQHKAAPAQKAQ) constitute a propeptide that is removed on maturation. Basic residues predominate over residues 80-90 (AAKKHAKKHSH). The segment covering 91-102 (QQPAKPAAQPAA) has biased composition (low complexity).

This sequence belongs to the Asr family. Post-translationally, proteolytic processing gives rise to the active protein.

It is found in the periplasm. Required for growth and/or survival at acidic conditions. This Escherichia coli (strain K12 / MC4100 / BW2952) protein is Acid shock protein.